A 247-amino-acid chain; its full sequence is UDP-2,3-diacylglucosamine hydrolase (247 aa).

Positions 8, 10, 41, 79, and 115 each coordinate Mn(2+). 79–80 provides a ligand contact to substrate; it reads NH. Substrate contacts are provided by Asp123, Lys165, Lys168, and His196. Residues His196 and His198 each contribute to the Mn(2+) site.

It belongs to the LpxH family. Mn(2+) serves as cofactor.

The protein resides in the cell inner membrane. The catalysed reaction is UDP-2-N,3-O-bis[(3R)-3-hydroxytetradecanoyl]-alpha-D-glucosamine + H2O = 2-N,3-O-bis[(3R)-3-hydroxytetradecanoyl]-alpha-D-glucosaminyl 1-phosphate + UMP + 2 H(+). It functions in the pathway glycolipid biosynthesis; lipid IV(A) biosynthesis; lipid IV(A) from (3R)-3-hydroxytetradecanoyl-[acyl-carrier-protein] and UDP-N-acetyl-alpha-D-glucosamine: step 4/6. Hydrolyzes the pyrophosphate bond of UDP-2,3-diacylglucosamine to yield 2,3-diacylglucosamine 1-phosphate (lipid X) and UMP by catalyzing the attack of water at the alpha-P atom. Involved in the biosynthesis of lipid A, a phosphorylated glycolipid that anchors the lipopolysaccharide to the outer membrane of the cell. This chain is UDP-2,3-diacylglucosamine hydrolase, found in Blochmanniella floridana.